We begin with the raw amino-acid sequence, 452 residues long: Protein henna (452 aa).

The 72-residue stretch at 36-107 folds into the ACT domain; that stretch reads FSPKDSSLSS…EQCSYFNIIS (72 aa). Ser272 is subject to Phosphoserine; by CaMK2. Fe cation is bound by residues His284, His289, and Glu329.

It belongs to the biopterin-dependent aromatic amino acid hydroxylase family. Fe(2+) is required as a cofactor. In terms of tissue distribution, phenylalanine hydrolase activity is found in yolk granules of embryos, and female abdomen and fat body tissues. Tryptophan hydroxylase is expressed in serotonergic neurons. Both enzymes are present in cuticular tissues.

The enzyme catalyses (6R)-L-erythro-5,6,7,8-tetrahydrobiopterin + L-phenylalanine + O2 = (4aS,6R)-4a-hydroxy-L-erythro-5,6,7,8-tetrahydrobiopterin + L-tyrosine. It carries out the reaction (6R)-L-erythro-5,6,7,8-tetrahydrobiopterin + L-tryptophan + O2 = 5-hydroxy-L-tryptophan + (4aS,6R)-4a-hydroxy-L-erythro-5,6,7,8-tetrahydrobiopterin. It functions in the pathway amino-acid degradation; L-phenylalanine degradation; acetoacetate and fumarate from L-phenylalanine: step 1/6. Its activity is regulated as follows. N-terminal region of PAH is thought to contain allosteric binding sites for phenylalanine and to constitute an 'inhibitory' domain that regulates the activity of a catalytic domain in the C-terminal portion of the molecule. The sequence is that of Protein henna (Hn) from Drosophila melanogaster (Fruit fly).